The primary structure comprises 453 residues: MAAVVLENGVLSRKLSDFGQETSYIEDNSNQNGAISLIFSLKEEVGALAKVLRLFEENDINLTHIESRPSRLNKDEYEFFTYLDKRTKPVLGSIIKSLRNDIGATVHELSRDKEKNTVPWFPRTIQELDRFANQILSYGAELDADHPGFKDPVYRARRKQFADIAYNYRHGQPIPRVEYTEEEKQTWGTVFRTLKALYKTHACYEHNHIFPLLEKYCGFREDNIPQLEDVSQFLQTCTGFRLRPVAGLLSSRDFLGGLAFRVFHCTQYIRHGSKPMYTPEPDICHELLGHVPLFSDRSFAQFSQEIGLASLGAPDEYIEKLATIYWFTVEFGLCKEGDSIKAYGAGLLSSFGELQYCLSDKPKLLPLELEKTACQEYSVTEFQPLYYVAESFSDAKEKVRTFAATIPRPFSVRYDPYTQRVEVLDNTQQLKILADSINSEVGILCNALQKIKS.

The residue at position 2 (Ala2) is an N-acetylalanine. Ser16 carries the post-translational modification Phosphoserine; by PKA. Positions Ser36 to Glu114 constitute an ACT domain. Fe cation is bound by residues His285, His290, and Glu330.

This sequence belongs to the biopterin-dependent aromatic amino acid hydroxylase family. Homodimer and homotetramer. The cofactor is Fe(2+). Phosphorylation at Ser-16 increases basal activity and facilitates activation by the substrate phenylalanine.

The enzyme catalyses (6R)-L-erythro-5,6,7,8-tetrahydrobiopterin + L-phenylalanine + O2 = (4aS,6R)-4a-hydroxy-L-erythro-5,6,7,8-tetrahydrobiopterin + L-tyrosine. Its pathway is amino-acid degradation; L-phenylalanine degradation; acetoacetate and fumarate from L-phenylalanine: step 1/6. Its activity is regulated as follows. N-terminal region of PAH is thought to contain allosteric binding sites for phenylalanine and to constitute an 'inhibitory' domain that regulates the activity of a catalytic domain in the C-terminal portion of the molecule. Functionally, catalyzes the hydroxylation of L-phenylalanine to L-tyrosine. The sequence is that of Phenylalanine-4-hydroxylase (Pah) from Rattus norvegicus (Rat).